Here is a 533-residue protein sequence, read N- to C-terminus: Glucosidase 2 subunit beta (533 aa).

The first 13 residues, 1-13 (MLLLLLLLPMCWA), serve as a signal peptide directing secretion. Phosphoserine is present on S23. LDL-receptor class A domains are found at residues 36–70 (FTCL…AACP) and 71–112 (NGSF…IVCE). Disulfide bonds link C38–C57 and C55–C69. Residue D48 participates in substrate binding. 6 residues coordinate Ca(2+): Q49, D52, Y54, D56, D62, and E63. D52 contacts substrate. N71 carries N-linked (GlcNAc...) asparagine glycosylation. 3 cysteine pairs are disulfide-bonded: C76–C98, C96–C111, and C99–C115. S88 carries the post-translational modification Phosphoserine; by PKC. Residues D93, V95, D97, D103, and E104 each contribute to the Ca(2+) site. N6-succinyllysine is present on K165. Residue S167 is modified to Phosphoserine. 2 EF-hand domains span residues 208–243 (RERE…DTDG) and 244–279 (DGAL…RDKY). Ca(2+)-binding residues include D221, D223, D225, and E232. The disordered stretch occupies residues 284–363 (LPTEYPPSPP…SPTEEDRMPP (80 aa)). Acidic residues predominate over residues 312 to 336 (TEEEDEDEEDEETEEDEDEEDEDSQ). S388 and S395 each carry phosphoserine; by PKC. Positions 418–519 (SQCYELTTNE…ELMTPAACPE (102 aa)) constitute an MRH domain. Residues C420 and C433 are joined by a disulfide bond. S439 is subject to Phosphoserine; by PKC. 2 disulfide bridges follow: C476–C505 and C490–C517. N481 carries an N-linked (GlcNAc...) asparagine glycan. Residues 530-533 (HDEL) carry the Prevents secretion from ER motif.

As to quaternary structure, heterodimer of a catalytic alpha subunit (GANAB) and a beta subunit (PRKCSH). Binds glycosylated PTPRC. In terms of tissue distribution, ubiquitous. Highly expressed in liver, spleen, lung, duodenum, stomach, adrenal gland, pituitary, testis, corpus luteum, uterus and fetal ovary.

The protein localises to the endoplasmic reticulum. The protein operates within glycan metabolism; N-glycan metabolism. In terms of biological role, regulatory subunit of glucosidase II that cleaves sequentially the 2 innermost alpha-1,3-linked glucose residues from the Glc(2)Man(9)GlcNAc(2) oligosaccharide precursor of immature glycoproteins. Required for efficient PKD1/Polycystin-1 biogenesis and trafficking to the plasma membrane of the primary cilia. This chain is Glucosidase 2 subunit beta (PRKCSH), found in Bos taurus (Bovine).